We begin with the raw amino-acid sequence, 224 residues long: TBP-related factor (224 aa).

The segment at 14–34 is disordered; it reads RDNVAATSNAAANPHAALQPQ. The segment covering 17-34 has biased composition (low complexity); that stretch reads VAATSNAAANPHAALQPQ. A run of 2 repeats spans residues 51 to 127 and 141 to 218.

This sequence belongs to the TBP family. As to expression, primary spermatocytes in the adult testis and in a subset of cells in the dorsal medial region of the embryonic CNS.

It localises to the nucleus. Functionally, acts as a transcription factor. Binds to the TATA box promoter element which lies close to the position of transcription initiation. Its function is as follows. May be essential for embryonic development. This chain is TBP-related factor (Trf), found in Drosophila melanogaster (Fruit fly).